We begin with the raw amino-acid sequence, 277 residues long: Proteasome assembly chaperone 1 (277 aa).

This sequence belongs to the PSMG1 family. Forms a heterodimer with psmg2. Post-translationally, degraded by the proteasome upon completion of 20S proteasome maturation.

It localises to the cytoplasm. The protein localises to the endoplasmic reticulum. Functionally, chaperone protein which promotes assembly of the 20S proteasome as part of a heterodimer with psmg2. The chain is Proteasome assembly chaperone 1 from Danio rerio (Zebrafish).